The following is a 626-amino-acid chain: Chaperone protein DnaK (626 aa).

A Phosphothreonine; by autocatalysis modification is found at Thr-197. 2 stretches are compositionally biased toward basic and acidic residues: residues 512 to 528 (DAEAHKEDDKKRKEAVE) and 539 to 551 (QTEKSLSEMGEKI). Disordered regions lie at residues 512-551 (DAEAHKEDDKKRKEAVEARNAADSLAHQTEKSLSEMGEKI) and 601-626 (DQNAGAADGGAEKKKKDDDVIDAEVE).

Belongs to the heat shock protein 70 family.

Acts as a chaperone. This Campylobacter fetus subsp. fetus (strain 82-40) protein is Chaperone protein DnaK.